The following is a 618-amino-acid chain: Uptake hydrogenase large subunit (618 aa).

C75, C78, C597, and C600 together coordinate Ni(2+).

The protein belongs to the [NiFe]/[NiFeSe] hydrogenase large subunit family. In terms of assembly, heterodimer of a large and a small subunit. Ni(2+) is required as a cofactor.

The protein resides in the cell membrane. It catalyses the reaction H2 + A = AH2. Functionally, this enzyme recycles the H(2) produced by nitrogenase to increase the production of ATP and to protect nitrogenase against inhibition or damage by O(2) under carbon- or phosphate-limited conditions. The protein is Uptake hydrogenase large subunit (hoxG) of Cupriavidus necator (strain ATCC 17699 / DSM 428 / KCTC 22496 / NCIMB 10442 / H16 / Stanier 337) (Ralstonia eutropha).